We begin with the raw amino-acid sequence, 391 residues long: Cystathionine beta-lyase MetC (391 aa).

K196 bears the N6-(pyridoxal phosphate)lysine mark.

The protein belongs to the trans-sulfuration enzymes family. Homotetramer. Pyridoxal 5'-phosphate serves as cofactor.

It carries out the reaction L,L-cystathionine + H2O = L-homocysteine + pyruvate + NH4(+). It catalyses the reaction an S-substituted L-cysteine + H2O = a thiol + pyruvate + NH4(+). It functions in the pathway amino-acid biosynthesis; L-methionine biosynthesis via de novo pathway; L-homocysteine from L-cystathionine: step 1/1. Cystathionine beta-lyase activity is inhibited by sweat components such as glycine, serine and ammonium sulfate. Inhibited by cystathionine at a concentration higher than 6 mM. Functionally, catalyzes the transformation of cystathionine into homocysteine. Can also catalyze, at low levels, the conversion of cystathionine into methionine and the conversion of methionine into methanethiol. The chain is Cystathionine beta-lyase MetC from Staphylococcus haemolyticus (strain JCSC1435).